The chain runs to 252 residues: MFS-type transporter cctQ (252 aa).

The next 2 helical transmembrane spans lie at 54 to 74 (IGSL…VVLP) and 116 to 136 (FGSF…IVGF). A glycan (N-linked (GlcNAc...) asparagine) is linked at asparagine 179. Transmembrane regions (helical) follow at residues 180–200 (FSIC…WILA) and 208–228 (FLVW…YFTT).

It belongs to the major facilitator superfamily.

Its subcellular location is the membrane. The protein operates within mycotoxin biosynthesis. Functionally, MFS-type transporter; part of the gene cluster that mediates the biosynthesis of the mycotoxin cyclochlorotine, a hepatotoxic and carcinogenic cyclic chlorinated pentapeptide. Most likely responsible for cyclochlorotine secretion and thereby may contribute to intrinsic resistance. In Talaromyces islandicus (Penicillium islandicum), this protein is MFS-type transporter cctQ.